Consider the following 1396-residue polypeptide: DNA-directed RNA polymerase subunit beta' (1396 aa).

C70, C72, C85, and C88 together coordinate Zn(2+). Residues D460, D462, and D464 each contribute to the Mg(2+) site. Zn(2+) contacts are provided by C807, C881, C888, and C891. Positions 1361-1378 (EPEEIEEPVPEDLEDETA) are enriched in acidic residues. The disordered stretch occupies residues 1361–1396 (EPEEIEEPVPEDLEDETAGADSAQAASEESVAEGKD). Over residues 1379-1389 (GADSAQAASEE) the composition is skewed to low complexity.

It belongs to the RNA polymerase beta' chain family. The RNAP catalytic core consists of 2 alpha, 1 beta, 1 beta' and 1 omega subunit. When a sigma factor is associated with the core the holoenzyme is formed, which can initiate transcription. It depends on Mg(2+) as a cofactor. Requires Zn(2+) as cofactor.

It carries out the reaction RNA(n) + a ribonucleoside 5'-triphosphate = RNA(n+1) + diphosphate. Its function is as follows. DNA-dependent RNA polymerase catalyzes the transcription of DNA into RNA using the four ribonucleoside triphosphates as substrates. This Syntrophotalea carbinolica (strain DSM 2380 / NBRC 103641 / GraBd1) (Pelobacter carbinolicus) protein is DNA-directed RNA polymerase subunit beta'.